The primary structure comprises 156 residues: Small ribosomal subunit protein uS7 (156 aa).

Belongs to the universal ribosomal protein uS7 family. In terms of assembly, part of the 30S ribosomal subunit. Contacts proteins S9 and S11.

Its function is as follows. One of the primary rRNA binding proteins, it binds directly to 16S rRNA where it nucleates assembly of the head domain of the 30S subunit. Is located at the subunit interface close to the decoding center, probably blocks exit of the E-site tRNA. This is Small ribosomal subunit protein uS7 from Anaeromyxobacter dehalogenans (strain 2CP-1 / ATCC BAA-258).